The following is a 177-amino-acid chain: ATP synthase subunit delta (177 aa).

It belongs to the ATPase delta chain family. As to quaternary structure, F-type ATPases have 2 components, F(1) - the catalytic core - and F(0) - the membrane proton channel. F(1) has five subunits: alpha(3), beta(3), gamma(1), delta(1), epsilon(1). F(0) has three main subunits: a(1), b(2) and c(10-14). The alpha and beta chains form an alternating ring which encloses part of the gamma chain. F(1) is attached to F(0) by a central stalk formed by the gamma and epsilon chains, while a peripheral stalk is formed by the delta and b chains.

Its subcellular location is the cell inner membrane. Its function is as follows. F(1)F(0) ATP synthase produces ATP from ADP in the presence of a proton or sodium gradient. F-type ATPases consist of two structural domains, F(1) containing the extramembraneous catalytic core and F(0) containing the membrane proton channel, linked together by a central stalk and a peripheral stalk. During catalysis, ATP synthesis in the catalytic domain of F(1) is coupled via a rotary mechanism of the central stalk subunits to proton translocation. Functionally, this protein is part of the stalk that links CF(0) to CF(1). It either transmits conformational changes from CF(0) to CF(1) or is implicated in proton conduction. The sequence is that of ATP synthase subunit delta from Shewanella halifaxensis (strain HAW-EB4).